Consider the following 747-residue polypeptide: Ferrichrome outer membrane transporter/phage receptor (747 aa).

A signal peptide spans 1 to 33; sequence MARSKTAQPKHSLRKIAVVVATAVSGMSVYAQA. Topologically, residues 34–192 are periplasmic; that stretch reads AVEPKEDTIT…NMVSKRPTTE (159 aa). Residues 40–47 carry the TonB box motif; sequence DTITVTAA. A TBDR plug domain is found at 75 to 187; it reads PIQKVPQSIS…PGGLLNMVSK (113 aa). Ferrichrome-binding positions include Arg114, Gln133, and 148-149; that span reads FY. A TBDR beta-barrel domain is found at 192–747; it reads EPLKEVQFKA…QVVATATFRF (556 aa). A beta stranded membrane pass occupies residues 193–201; the sequence is PLKEVQFKA. Residues 202-206 lie on the Extracellular side of the membrane; that stretch reads GTDSL. A beta stranded transmembrane segment spans residues 207–215; it reads FQTGFDFSD. At 216–222 the chain is on the periplasmic side; that stretch reads SLDDDGV. Residues 223–231 form a beta stranded membrane-spanning segment; that stretch reads YSYRLTGLA. Topologically, residues 232–245 are extracellular; sequence RSANAQQKGSEEQR. A beta stranded transmembrane segment spans residues 246–255; that stretch reads YAIAPAFTWR. The Periplasmic segment spans residues 256–259; sequence PDDK. The beta stranded transmembrane segment at 260 to 268 threads the bilayer; that stretch reads TNFTFLSYF. Over 269–312 the chain is Extracellular; sequence QNEPETGYYGWLPKEGTVEPLPNGKRLPTDFNEGAKNNTYSRNE. Position 277-279 (277-279) interacts with ferrichrome; that stretch reads YGW. A beta stranded transmembrane segment spans residues 313 to 321; that stretch reads KMVGYSFDH. Residues 322–326 are Periplasmic-facing; sequence EFNDT. Residues 327-335 form a beta stranded membrane-spanning segment; it reads FTVRQNLRF. Residues 336 to 387 are Extracellular-facing; the sequence is AENKTSQNSVYGYGVCSDPANAYSKQCAALAPADKGHYLARKYVVDDEKLQN. Residue 346–348 coordinates ferrichrome; that stretch reads YGY. Cys351 and Cys362 are disulfide-bonded. A beta stranded transmembrane segment spans residues 388–396; that stretch reads FSVDTQLQS. The Periplasmic segment spans residues 397–404; sequence KFATGDID. Residues 405–413 form a beta stranded membrane-spanning segment; sequence HTLLTGVDF. The Extracellular portion of the chain corresponds to 414-464; it reads MRMRNDINAWFGYDDSVPLLNLYNPVNTDFDFNAKDPANSGPYRILNKQKQ. Phe424 contacts ferrichrome. The beta stranded transmembrane segment at 465-473 threads the bilayer; sequence TGVYVQDQA. Over 474–477 the chain is Periplasmic; it reads QWDK. A beta stranded transmembrane segment spans residues 478 to 486; sequence VLVTLGGRY. Topologically, residues 487–508 are extracellular; that stretch reads DWADQESLNRVAGTTDKRDDKQ. A beta stranded membrane pass occupies residues 509 to 517; sequence FTWRGGVNY. The Periplasmic segment spans residues 518–522; the sequence is LFDNG. A beta stranded membrane pass occupies residues 523-531; it reads VTPYFSYSE. Residues 532–551 lie on the Extracellular side of the membrane; sequence SFEPSSQVGKDGNIFAPSKG. The beta stranded transmembrane segment at 552–560 threads the bilayer; it reads KQYEVGVKY. Over 561 to 565 the chain is Periplasmic; it reads VPEDR. Residues 566–574 traverse the membrane as a beta stranded segment; the sequence is PIVVTGAVY. The Extracellular segment spans residues 575-601; it reads NLTKTNNLMADPEGSFFSVEGGEIRAR. The beta stranded transmembrane segment at 602-610 threads the bilayer; the sequence is GVEIEAKAA. At 611–613 the chain is on the periplasmic side; sequence LSA. The chain crosses the membrane as a beta stranded span at residues 614 to 622; it reads SVNVVGSYT. Residues 623–645 lie on the Extracellular side of the membrane; the sequence is YTDAEYTTDTTYKGNTPAQVPKH. The chain crosses the membrane as a beta stranded span at residues 646–654; the sequence is MASLWADYT. The Periplasmic segment spans residues 655–661; sequence FFDGPLS. Residues 662 to 670 traverse the membrane as a beta stranded segment; it reads GLTLGTGGR. Over 671–689 the chain is Extracellular; it reads YTGSSYGDPANSFKVGSYT. A beta stranded membrane pass occupies residues 690-698; it reads VVDALVRYD. Over 699-705 the chain is Periplasmic; it reads LARVGMA. Residues 706–714 form a beta stranded membrane-spanning segment; the sequence is GSNVALHVN. At 715–737 the chain is on the extracellular side; the sequence is NLFDREYVASCFNTYGCFWGAER. The cysteines at positions 725 and 731 are disulfide-linked. Positions 730 to 747 match the TonB C-terminal box motif; it reads GCFWGAERQVVATATFRF. Ala735 contributes to the ferrichrome binding site. Residues 738–746 form a beta stranded membrane-spanning segment; it reads QVVATATFR. Phe747 is a topological domain (periplasmic).

Belongs to the TonB-dependent receptor family. In terms of assembly, monomer. Interacts with TonB. Interacts with Escherichia phage T5 receptor-binding protein pb5 (RBP-pb5); this interaction is necessary for the entry of the viral genome into the host cell.

It is found in the cell outer membrane. With respect to regulation, binding of ferrichrome or colicin M enhances the interaction between FhuA and TonB. TonB activates FhuA through interaction with the beta-barrel. Its function is as follows. Involved in the uptake of iron in complex with ferrichrome, a hydroxamate-type siderophore. Binds and transports ferrichrome-iron across the outer membrane. In addition to its role in ferrichrome-iron transport, transports the antibiotic albomycin, which is a structural analog of ferrichrome, and acts as a receptor for colicin M, microcin J25 and bacteriophages T1, T5, phi80 and UC-1. The energy source, which is required for all FhuA functions except infection by phage T5, is provided by the inner membrane TonB system. The protein is Ferrichrome outer membrane transporter/phage receptor of Escherichia coli (strain K12).